Here is a 971-residue protein sequence, read N- to C-terminus: Nucleolar protein dao-5 (971 aa).

Disordered regions lie at residues 61–926 (RIAS…QWGQ) and 938–971 (KAFRHEKTKKKKGSYGGGPINQSINSIKFSDSDD). The segment covering 134–150 (KKPAQTPAQKKAASSSD) has biased composition (low complexity). Positions 180–190 (SDSDSDSEDSD) are enriched in acidic residues. Low complexity-rich tracts occupy residues 264 to 275 (AKPAPAKATPKP), 294 to 304 (KKTPAKAAPKP), 324 to 335 (AKPTPAKATPKP), 355 to 366 (AKPAPAKATPKP), 386 to 397 (AKPTPAKATPKP), 417 to 428 (AKPTSAKATPKP), 447 to 457 (KKTPAKAAPKP), 476 to 498 (AKSTPAKITPKPTAKKVASSSSD), 508 to 519 (AKPTPANATPKP), 539 to 550 (AKPTSAKATPKP), 569 to 579 (KKTPAKAAPKP), 598 to 620 (AKSTPAKTTPKPTAKKAASSSSD), 630 to 641 (AKPTSAKATPKP), 691 to 712 (KATPVKVTPKSVTKKAAASSSD), 751 to 761 (AKPTPKATPKQ), 780 to 791 (KKTPAKSTPAKT), and 815 to 825 (ATTPAKSTPKT). Positions 907–921 (SVSEKFRNNQHDSHF) are enriched in basic and acidic residues. A compositionally biased stretch (basic residues) spans 939–950 (AFRHEKTKKKKG). The span at 957–971 (INQSINSIKFSDSDD) shows a compositional bias: polar residues.

It belongs to the NOLC1 family. In terms of assembly, may form dimers. Interacts with RNA polymerase I. As to expression, expressed in the nerve ring and hypodermal tissues. Expressed in the intestine. Expressed in the germline.

It localises to the nucleus. The protein resides in the nucleolus. It is found in the nucleoplasm. Its function is as follows. Nucleolar protein which binds to RNA polymerase I and rDNA and is required for efficient RNA polymerase I-mediated rDNA transcription. Maintains the epigenetically active status of rDNA chromatin which facilitates rDNA transcription and sustains germline development, ensuring fertility. Plays a role in the modulation of nucleolus size. May play a role in the regulation of lifespan. The polypeptide is Nucleolar protein dao-5 (Caenorhabditis elegans).